A 360-amino-acid chain; its full sequence is Phospho-N-acetylmuramoyl-pentapeptide-transferase (360 aa).

Transmembrane regions (helical) follow at residues 27 to 47 (IVSLLTALVISLWMGPHMIAW), 73 to 93 (TMGGVMILVAIIVSVLMWANL), 94 to 114 (SNPYVWCVLLVLAGYGAVGFV), 132 to 152 (WKYFWQSVIALVVAFSMYAIG), 168 to 188 (VMPQLGLLYVALAYFVIVGTS), 199 to 219 (GLAIMPTVFVAAGFALVAWAT), 236 to 256 (ASELVIVCTAIVGAGLGFLWF), 263 to 283 (VFMGDVGSLALGGALGTIAVL), 288 to 308 (FLLVIMGGVFVVETLSVILQV), and 338 to 358 (VIVRFWIISLMLVLIGLATLK).

This sequence belongs to the glycosyltransferase 4 family. MraY subfamily. Mg(2+) is required as a cofactor.

It localises to the cell inner membrane. It carries out the reaction UDP-N-acetyl-alpha-D-muramoyl-L-alanyl-gamma-D-glutamyl-meso-2,6-diaminopimeloyl-D-alanyl-D-alanine + di-trans,octa-cis-undecaprenyl phosphate = di-trans,octa-cis-undecaprenyl diphospho-N-acetyl-alpha-D-muramoyl-L-alanyl-D-glutamyl-meso-2,6-diaminopimeloyl-D-alanyl-D-alanine + UMP. It participates in cell wall biogenesis; peptidoglycan biosynthesis. In terms of biological role, catalyzes the initial step of the lipid cycle reactions in the biosynthesis of the cell wall peptidoglycan: transfers peptidoglycan precursor phospho-MurNAc-pentapeptide from UDP-MurNAc-pentapeptide onto the lipid carrier undecaprenyl phosphate, yielding undecaprenyl-pyrophosphoryl-MurNAc-pentapeptide, known as lipid I. This chain is Phospho-N-acetylmuramoyl-pentapeptide-transferase, found in Pectobacterium carotovorum subsp. carotovorum (strain PC1).